The sequence spans 77 residues: DinI-like protein in retron Ec67 (77 aa).

Belongs to the DinI family.

The sequence is that of DinI-like protein in retron Ec67 from Escherichia coli.